A 158-amino-acid polypeptide reads, in one-letter code: Ribosomal RNA large subunit methyltransferase H (158 aa).

S-adenosyl-L-methionine is bound by residues L72, G103, and 122–127; that span reads LGNLTL.

The protein belongs to the RNA methyltransferase RlmH family. In terms of assembly, homodimer.

The protein resides in the cytoplasm. It catalyses the reaction pseudouridine(1915) in 23S rRNA + S-adenosyl-L-methionine = N(3)-methylpseudouridine(1915) in 23S rRNA + S-adenosyl-L-homocysteine + H(+). Functionally, specifically methylates the pseudouridine at position 1915 (m3Psi1915) in 23S rRNA. This is Ribosomal RNA large subunit methyltransferase H from Acidiphilium cryptum (strain JF-5).